The following is a 116-amino-acid chain: Nucleoid-associated protein P9301_00191 (116 aa).

This sequence belongs to the YbaB/EbfC family. In terms of assembly, homodimer.

It localises to the cytoplasm. The protein localises to the nucleoid. In terms of biological role, binds to DNA and alters its conformation. May be involved in regulation of gene expression, nucleoid organization and DNA protection. The sequence is that of Nucleoid-associated protein P9301_00191 from Prochlorococcus marinus (strain MIT 9301).